Reading from the N-terminus, the 215-residue chain is Thiamine-phosphate synthase (215 aa).

Residues 43–47 (QLRDK) and Asn75 contribute to the 4-amino-2-methyl-5-(diphosphooxymethyl)pyrimidine site. The Mg(2+) site is built by Asp76 and Asp95. Ser114 contributes to the 4-amino-2-methyl-5-(diphosphooxymethyl)pyrimidine binding site. 141-143 (TPT) is a binding site for 2-[(2R,5Z)-2-carboxy-4-methylthiazol-5(2H)-ylidene]ethyl phosphate. Lys144 contributes to the 4-amino-2-methyl-5-(diphosphooxymethyl)pyrimidine binding site. Gly172 contributes to the 2-[(2R,5Z)-2-carboxy-4-methylthiazol-5(2H)-ylidene]ethyl phosphate binding site.

This sequence belongs to the thiamine-phosphate synthase family. The cofactor is Mg(2+).

The catalysed reaction is 2-[(2R,5Z)-2-carboxy-4-methylthiazol-5(2H)-ylidene]ethyl phosphate + 4-amino-2-methyl-5-(diphosphooxymethyl)pyrimidine + 2 H(+) = thiamine phosphate + CO2 + diphosphate. The enzyme catalyses 2-(2-carboxy-4-methylthiazol-5-yl)ethyl phosphate + 4-amino-2-methyl-5-(diphosphooxymethyl)pyrimidine + 2 H(+) = thiamine phosphate + CO2 + diphosphate. It catalyses the reaction 4-methyl-5-(2-phosphooxyethyl)-thiazole + 4-amino-2-methyl-5-(diphosphooxymethyl)pyrimidine + H(+) = thiamine phosphate + diphosphate. The protein operates within cofactor biosynthesis; thiamine diphosphate biosynthesis; thiamine phosphate from 4-amino-2-methyl-5-diphosphomethylpyrimidine and 4-methyl-5-(2-phosphoethyl)-thiazole: step 1/1. Condenses 4-methyl-5-(beta-hydroxyethyl)thiazole monophosphate (THZ-P) and 2-methyl-4-amino-5-hydroxymethyl pyrimidine pyrophosphate (HMP-PP) to form thiamine monophosphate (TMP). The chain is Thiamine-phosphate synthase from Streptomyces avermitilis (strain ATCC 31267 / DSM 46492 / JCM 5070 / NBRC 14893 / NCIMB 12804 / NRRL 8165 / MA-4680).